A 782-amino-acid chain; its full sequence is LPS-assembly protein LptD (782 aa).

An N-terminal signal peptide occupies residues 1–24 (MKKNSYTRLSIAILSTLYSVSSLA).

This sequence belongs to the LptD family. As to quaternary structure, component of the lipopolysaccharide transport and assembly complex. Interacts with LptE and LptA.

It is found in the cell outer membrane. Functionally, together with LptE, is involved in the assembly of lipopolysaccharide (LPS) at the surface of the outer membrane. This chain is LPS-assembly protein LptD, found in Pasteurella multocida (strain Pm70).